Here is a 174-residue protein sequence, read N- to C-terminus: Interferon gamma (174 aa).

The N-terminal stretch at 1–23 (MNSTRCILALLLCLTQAMSGCYG) is a signal peptide. A Pyrrolidone carboxylic acid modification is found at Gln24. N-linked (GlcNAc...) asparagine glycans are attached at residues Asn39 and Asn106.

It belongs to the type II (or gamma) interferon family. As to quaternary structure, homodimer. Interacts with IFNGR1 (via extracellular domain); this interaction promotes IFNGR1 dimerization. In terms of tissue distribution, released primarily from activated T lymphocytes.

Its subcellular location is the secreted. Its function is as follows. Type II interferon produced by immune cells such as T-cells and NK cells that plays crucial roles in antimicrobial, antiviral, and antitumor responses by activating effector immune cells and enhancing antigen presentation. Primarily signals through the JAK-STAT pathway after interaction with its receptor IFNGR1 to affect gene regulation. Upon IFNG binding, IFNGR1 intracellular domain opens out to allow association of downstream signaling components JAK2, JAK1 and STAT1, leading to STAT1 activation, nuclear translocation and transcription of IFNG-regulated genes. Many of the induced genes are transcription factors such as IRF1 that are able to further drive regulation of a next wave of transcription. Plays a role in class I antigen presentation pathway by inducing a replacement of catalytic proteasome subunits with immunoproteasome subunits. In turn, increases the quantity, quality, and repertoire of peptides for class I MHC loading. Increases the efficiency of peptide generation also by inducing the expression of activator PA28 that associates with the proteasome and alters its proteolytic cleavage preference. Up-regulates as well MHC II complexes on the cell surface by promoting expression of several key molecules such as cathepsins B/CTSB, H/CTSH, and L/CTSL. Participates in the regulation of hematopoietic stem cells during development and under homeostatic conditions by affecting their development, quiescence, and differentiation. The polypeptide is Interferon gamma (IFNG) (Phodopus sungorus (Striped hairy-footed hamster)).